The sequence spans 176 residues: Peptidyl-prolyl cis-trans isomerase cyp5 (176 aa).

The 164-residue stretch at 10–173 (FFDVAVNGKP…AKVEIVDCGE (164 aa)) folds into the PPIase cyclophilin-type domain.

It belongs to the cyclophilin-type PPIase family.

The catalysed reaction is [protein]-peptidylproline (omega=180) = [protein]-peptidylproline (omega=0). Functionally, PPIases accelerate the folding of proteins. It catalyzes the cis-trans isomerization of proline imidic peptide bonds in oligopeptides. This is Peptidyl-prolyl cis-trans isomerase cyp5 (cyp5) from Rhizopus delemar (strain RA 99-880 / ATCC MYA-4621 / FGSC 9543 / NRRL 43880) (Mucormycosis agent).